A 445-amino-acid chain; its full sequence is Phosphoglucosamine mutase (445 aa).

Residue Ser101 is the Phosphoserine intermediate of the active site. Ser101, Asp240, Asp242, and Asp244 together coordinate Mg(2+). At Ser101 the chain carries Phosphoserine.

It belongs to the phosphohexose mutase family. Requires Mg(2+) as cofactor. In terms of processing, activated by phosphorylation.

The catalysed reaction is alpha-D-glucosamine 1-phosphate = D-glucosamine 6-phosphate. In terms of biological role, catalyzes the conversion of glucosamine-6-phosphate to glucosamine-1-phosphate. The protein is Phosphoglucosamine mutase of Pseudomonas aeruginosa (strain LESB58).